The following is a 251-amino-acid chain: MAIHADTHDDLRLFQTGEHACGYWSDRRARDLVLDPHDPRLGAIYPQALAWGFRRSGDLVYRPHCERCRACVPVRIAVDAFHPDRSQRRCLTRNQDLVVRVVAAERTDEQLALYRQYLKYRHPGGGMDEHGATEFDQFLIGGWSHGRFLEIREPAIAHLPGRLLAVAVTDVTEHALSAVYTFYAPEAAARSLGTFAILQQIQWAQRERRAHVYLGYWIEGHAKMNYKRRFSALEAYDGRHWCDLPAHPSGT.

Belongs to the R-transferase family. Bpt subfamily.

It is found in the cytoplasm. It carries out the reaction N-terminal L-glutamyl-[protein] + L-leucyl-tRNA(Leu) = N-terminal L-leucyl-L-glutamyl-[protein] + tRNA(Leu) + H(+). The enzyme catalyses N-terminal L-aspartyl-[protein] + L-leucyl-tRNA(Leu) = N-terminal L-leucyl-L-aspartyl-[protein] + tRNA(Leu) + H(+). Its function is as follows. Functions in the N-end rule pathway of protein degradation where it conjugates Leu from its aminoacyl-tRNA to the N-termini of proteins containing an N-terminal aspartate or glutamate. The polypeptide is Aspartate/glutamate leucyltransferase (Xanthomonas oryzae pv. oryzae (strain MAFF 311018)).